The following is a 213-amino-acid chain: Probable nicotinate-nucleotide adenylyltransferase (213 aa).

Belongs to the NadD family.

It carries out the reaction nicotinate beta-D-ribonucleotide + ATP + H(+) = deamido-NAD(+) + diphosphate. The protein operates within cofactor biosynthesis; NAD(+) biosynthesis; deamido-NAD(+) from nicotinate D-ribonucleotide: step 1/1. Its function is as follows. Catalyzes the reversible adenylation of nicotinate mononucleotide (NaMN) to nicotinic acid adenine dinucleotide (NaAD). The polypeptide is Probable nicotinate-nucleotide adenylyltransferase (Shigella boydii serotype 18 (strain CDC 3083-94 / BS512)).